The primary structure comprises 632 residues: Pescadillo homolog (632 aa).

Residues 306–341 form a disordered region; that stretch reads GDDADVDMDEGAKETDEEEDEDFVERPSKAQEVDDV. Residues 307–328 are compositionally biased toward acidic residues; the sequence is DDADVDMDEGAKETDEEEDEDF. One can recognise a BRCT domain in the interval 361-459; that stretch reads RQNLLFSPYT…KIISSEGYGP (99 aa). 3 disordered regions span residues 485 to 535, 565 to 585, and 601 to 632; these read GEKA…QNPS, TKVH…EEDL, and MQYS…EAKA. Acidic residues predominate over residues 492-516; sequence QEGEEEEEAAEQDEGESEDEEEDGK. A compositionally biased stretch (low complexity) spans 521 to 531; sequence AEYPPALLAAA. 2 stretches are compositionally biased toward basic and acidic residues: residues 576–585 and 605–616; these read QKEKKGEEDL and NREKAAEKEKLE. Residues 595–632 adopt a coiled-coil conformation; the sequence is AKLYEKMQYSNREKAAEKEKLEKKRKAIEKRKAKEAKA.

Belongs to the pescadillo family. As to quaternary structure, component of the NOP7 complex, composed of ERB1, NOP7 and YTM1. The complex is held together by ERB1, which interacts with NOP7 via its N-terminal domain and with YTM1 via a high-affinity interaction between the seven-bladed beta-propeller domains of the 2 proteins. The NOP7 complex associates with the 66S pre-ribosome.

The protein localises to the nucleus. It localises to the nucleolus. It is found in the nucleoplasm. Its function is as follows. Component of the NOP7 complex, which is required for maturation of the 25S and 5.8S ribosomal RNAs and formation of the 60S ribosome. The polypeptide is Pescadillo homolog (Cryptococcus neoformans var. neoformans serotype D (strain B-3501A) (Filobasidiella neoformans)).